A 273-amino-acid chain; its full sequence is Nicotinamide N-methyltransferase (273 aa).

S-adenosyl-L-methionine is bound by residues tyrosine 35, tyrosine 40, 74 to 75, tyrosine 80, aspartate 96, asparagine 101, and 152 to 153; these read GA and NV.

This sequence belongs to the class I-like SAM-binding methyltransferase superfamily. NNMT/PNMT/TEMT family.

The enzyme catalyses nicotinamide + S-adenosyl-L-methionine = 1-methylnicotinamide + S-adenosyl-L-homocysteine. Functionally, catalyzes the N-methylation of nicotinamide and other pyridines to form pyridinium ions. Involved in regulation of lifespan extension downstream of the sirtuin sir-2.1, probably through its role in nicotinic acid metabolism. The sequence is that of Nicotinamide N-methyltransferase from Caenorhabditis elegans.